The sequence spans 480 residues: Glutamate--tRNA ligase (480 aa).

The 'HIGH' region motif lies at 21 to 31; it reads PSPTGYLHVGG. Basic and acidic residues predominate over residues 122–146; it reads NTQEQNKQKPRYDRHCLGDHKHSPE. The tract at residues 122–149 is disordered; that stretch reads NTQEQNKQKPRYDRHCLGDHKHSPEQPH. Positions 248 to 252 match the 'KMSKS' region motif; that stretch reads KLSKR. ATP is bound at residue K251.

This sequence belongs to the class-I aminoacyl-tRNA synthetase family. Glutamate--tRNA ligase type 1 subfamily. As to quaternary structure, monomer.

Its subcellular location is the cytoplasm. The enzyme catalyses tRNA(Glu) + L-glutamate + ATP = L-glutamyl-tRNA(Glu) + AMP + diphosphate. In terms of biological role, catalyzes the attachment of glutamate to tRNA(Glu) in a two-step reaction: glutamate is first activated by ATP to form Glu-AMP and then transferred to the acceptor end of tRNA(Glu). This is Glutamate--tRNA ligase from Pasteurella multocida (strain Pm70).